We begin with the raw amino-acid sequence, 473 residues long: Mogroside IIIx synthase (473 aa).

Histidine 43 serves as the catalytic Proton acceptor. Aspartate 142 serves as the catalytic Charge relay. 8 residues coordinate UDP-alpha-D-glucose: serine 293, glutamine 356, tryptophan 374, asparagine 375, serine 376, glutamate 379, aspartate 395, and glutamine 396.

It belongs to the UDP-glycosyltransferase family. Highly expressed in mature fruits.

The enzyme catalyses mogroside IIE + UDP-alpha-D-glucose = mogroside IIIX + UDP + H(+). It catalyses the reaction mogroside III + UDP-alpha-D-glucose = mogroside IV + UDP + H(+). It carries out the reaction mogroside III + UDP-alpha-D-glucose = siamenoside I + UDP + H(+). The catalysed reaction is mogroside IIIX + UDP-alpha-D-glucose = mogroside IVA + UDP + H(+). The enzyme catalyses mogroside IIIX + UDP-alpha-D-glucose = siamenoside I + UDP + H(+). It catalyses the reaction mogroside IV + UDP-alpha-D-glucose = mogroside V + UDP + H(+). It carries out the reaction siamenoside I + UDP-alpha-D-glucose = mogroside V + UDP + H(+). The catalysed reaction is mogroside V + UDP-alpha-D-glucose = mogroside VI + UDP + H(+). It functions in the pathway secondary metabolite biosynthesis; terpenoid biosynthesis. Activity is increased by Mg(2+). UDP-glycosyltransferase involved in the biosynthesis of cucurbitacin and mogroside tetracyclic triterpene natural products (e.g. siamenoside I and mogrosides IV, V and VI). Cucurbitacins have cytotoxic properties and exhibit deterrent taste as a defense barrier against herbivores. Mogrosides are nonsugar highly oxygenated compounds used as high-intensity zero-calorie sweeteners; they also possess pharmacological properties such as regulating immunity, lowering blood sugar and lipid levels, protecting the liver, and acting as antioxidants and antitumor agents. In terms of biological role, catalyzes the branched glucosylations of mogroside II-E, mogroside III, mogroside IIIx, mogroside IV, mogroside IV-A, siamenoside I and mogroside V, ending in the production of mogroside VI. Functionally, catalyzes the beta(1-6) branched glucosylations of mogroside II-E to produce mogroside IIIx by forming a beta(1-6) glycosidic bond with the 6-hydroxyl of glucose 1-C24; a subsequent glycosylation at glucose 1-C3 leads to the formation of mogroside IV-A with beta(1-6) glycosidic bond. Can also use mogroside III-E, mogroside III-A, mogroside IV-E and mogroside IV-A as substrates. The chain is Mogroside IIIx synthase from Siraitia grosvenorii (Monk's fruit).